Consider the following 309-residue polypeptide: DSC E3 ubiquitin ligase complex subunit C (309 aa).

A glycan (N-linked (GlcNAc...) asparagine) is linked at Asn-61. Disordered regions lie at residues 88-110 (LPPS…GKGK) and 148-177 (EQAD…FDRL). The next 2 helical transmembrane spans lie at 257–277 (DDML…AMWL) and 289–309 (GLAV…RIMN).

It belongs to the dsc3 family. As to quaternary structure, component of the DSC E3 ubiquitin ligase complex composed of dscA, dscB, dscC and dscD.

The protein resides in the endoplasmic reticulum membrane. It participates in protein modification; protein ubiquitination. Functionally, component of the DSC E3 ubiquitin ligase complex which is required for the srbA transcriptional activator proteolytic cleavage to release the soluble transcription factor from the membrane in low oxygen or sterol conditions. Required for growth during hypoxia and triazole drug susceptibility, as well as for virulence in a murine model of invasive pulmonary aspergillosis (IPA). This chain is DSC E3 ubiquitin ligase complex subunit C, found in Aspergillus fumigatus (strain CBS 144.89 / FGSC A1163 / CEA10) (Neosartorya fumigata).